A 337-amino-acid polypeptide reads, in one-letter code: Phosphatidylglycerophosphate phosphatase PTPMT1 (337 aa).

The interval Met-1–Asp-20 is disordered. Positions 55 and 133 each coordinate substrate. Residues Trp-73 to Leu-220 form the Tyrosine-protein phosphatase domain. Catalysis depends on Cys-164, which acts as the Phosphocysteine intermediate. The Glucan phosphatase signature motif CXAGXGR signature appears at Cys-164 to Arg-170. Residue Lys-165–Arg-170 participates in substrate binding.

The protein belongs to the protein-tyrosine phosphatase family. Non-receptor class dual specificity subfamily. In terms of tissue distribution, expressed in stems, roots, flowers, mature seeds and leaves.

The enzyme catalyses O-phospho-L-seryl-[protein] + H2O = L-seryl-[protein] + phosphate. It catalyses the reaction O-phospho-L-threonyl-[protein] + H2O = L-threonyl-[protein] + phosphate. It carries out the reaction O-phospho-L-tyrosyl-[protein] + H2O = L-tyrosyl-[protein] + phosphate. The catalysed reaction is a 1,2-diacyl-sn-glycero-3-phospho-(1'-sn-glycero-3'-phosphate) + H2O = a 1,2-diacyl-sn-glycero-3-phospho-(1'-sn-glycerol) + phosphate. It participates in phospholipid metabolism; phosphatidylglycerol biosynthesis; phosphatidylglycerol from CDP-diacylglycerol: step 2/2. In terms of biological role, exhibits phosphatidylglycerophosphate phosphatase activity. Involved in root growth and columella cells organization. May possess protein phosphatase activity. This chain is Phosphatidylglycerophosphate phosphatase PTPMT1, found in Arabidopsis thaliana (Mouse-ear cress).